A 148-amino-acid polypeptide reads, in one-letter code: Lysozyme-like protein 1 (148 aa).

The N-terminal stretch at 1–19 is a signal peptide; it reads MKSVGVFALIISFSIVAES. In terms of domain architecture, C-type lysozyme spans 20–148; that stretch reads KIYTRCKLAK…SEWKRGCEVS (129 aa). 4 disulfides stabilise this stretch: Cys-25–Cys-145, Cys-49–Cys-133, Cys-83–Cys-98, and Cys-94–Cys-112. Glu-54 is an active-site residue. Asn-58 is a glycosylation site (N-linked (GlcNAc...) asparagine). The active site involves Asp-71.

It belongs to the glycosyl hydrolase 22 family. As to quaternary structure, monomer.

Its subcellular location is the secreted. It catalyses the reaction Hydrolysis of (1-&gt;4)-beta-linkages between N-acetylmuramic acid and N-acetyl-D-glucosamine residues in a peptidoglycan and between N-acetyl-D-glucosamine residues in chitodextrins.. The sequence is that of Lysozyme-like protein 1 (Lyzl1) from Mus musculus (Mouse).